The sequence spans 1093 residues: Atos homolog protein A (1093 aa).

Residues 29 to 37 form a transactivation domain 1 (TAD1) region; sequence ALLITEGRT. Disordered regions lie at residues 396 to 479, 558 to 579, and 746 to 788; these read AGRP…GNPL, SSKS…GESK, and HDNF…GSMR. A compositionally biased stretch (basic and acidic residues) spans 746 to 763; it reads HDNFKNKNRQDKTKAAHD. Residues 895–952 form a required for macropage invasion region; that stretch reads LLGNFEESVLNFRLDPLGIVEGFTAEVGASGVFCPTHMTLPVEVSFYSVSDDNAPSPY. The tract at residues 979-987 is transactivation domain 2 (TAD2); that stretch reads FNPNKTVVK.

The protein belongs to the ATOS family.

The protein localises to the nucleus. Its function is as follows. Transcription regulator that syncronizes transcriptional and translational programs to promote macrophage invasion of tissues. The chain is Atos homolog protein A (ATOSA) from Gallus gallus (Chicken).